The following is a 485-amino-acid chain: Glutamyl-tRNA(Gln) amidotransferase subunit A (485 aa).

Residues Lys79 and Ser154 each act as charge relay system in the active site. Ser178 (acyl-ester intermediate) is an active-site residue.

It belongs to the amidase family. GatA subfamily. In terms of assembly, heterotrimer of A, B and C subunits.

The catalysed reaction is L-glutamyl-tRNA(Gln) + L-glutamine + ATP + H2O = L-glutaminyl-tRNA(Gln) + L-glutamate + ADP + phosphate + H(+). Allows the formation of correctly charged Gln-tRNA(Gln) through the transamidation of misacylated Glu-tRNA(Gln) in organisms which lack glutaminyl-tRNA synthetase. The reaction takes place in the presence of glutamine and ATP through an activated gamma-phospho-Glu-tRNA(Gln). This chain is Glutamyl-tRNA(Gln) amidotransferase subunit A, found in Staphylococcus carnosus (strain TM300).